A 306-amino-acid polypeptide reads, in one-letter code: tRNA dimethylallyltransferase (306 aa).

14 to 21 (GPTAAGKS) lines the ATP pocket. 16–21 (TAAGKS) serves as a coordination point for substrate. Residues 39-42 (DSRL) form an interaction with substrate tRNA region.

It belongs to the IPP transferase family. As to quaternary structure, monomer. Requires Mg(2+) as cofactor.

The enzyme catalyses adenosine(37) in tRNA + dimethylallyl diphosphate = N(6)-dimethylallyladenosine(37) in tRNA + diphosphate. Catalyzes the transfer of a dimethylallyl group onto the adenine at position 37 in tRNAs that read codons beginning with uridine, leading to the formation of N6-(dimethylallyl)adenosine (i(6)A). This Synechococcus sp. (strain ATCC 27144 / PCC 6301 / SAUG 1402/1) (Anacystis nidulans) protein is tRNA dimethylallyltransferase.